The primary structure comprises 293 residues: Proline iminopeptidase (293 aa).

The region spanning 28–277 is the AB hydrolase-1 domain; the sequence is PLVLLHGGPG…NCGHMSFVEK (250 aa). Catalysis depends on serine 105, which acts as the Nucleophile. Residue aspartate 244 is part of the active site. The active-site Proton donor is the histidine 271.

Belongs to the peptidase S33 family.

It localises to the cell envelope. The catalysed reaction is Release of N-terminal proline from a peptide.. In terms of biological role, releases the N-terminal proline from various substrates. This is Proline iminopeptidase from Lactobacillus crispatus (strain ST1).